A 53-amino-acid chain; its full sequence is ATP synthase protein 8 (53 aa).

A helical transmembrane segment spans residues 4–24; sequence MAPISWLLLFIIFSITFILFC.

The protein belongs to the ATPase protein 8 family. F-type ATPases have 2 components, CF(1) - the catalytic core - and CF(0) - the membrane proton channel.

The protein resides in the mitochondrion membrane. Functionally, mitochondrial membrane ATP synthase (F(1)F(0) ATP synthase or Complex V) produces ATP from ADP in the presence of a proton gradient across the membrane which is generated by electron transport complexes of the respiratory chain. F-type ATPases consist of two structural domains, F(1) - containing the extramembraneous catalytic core and F(0) - containing the membrane proton channel, linked together by a central stalk and a peripheral stalk. During catalysis, ATP synthesis in the catalytic domain of F(1) is coupled via a rotary mechanism of the central stalk subunits to proton translocation. Part of the complex F(0) domain. Minor subunit located with subunit a in the membrane. The sequence is that of ATP synthase protein 8 (mt:ATPase8) from Drosophila sechellia (Fruit fly).